We begin with the raw amino-acid sequence, 271 residues long: Undecaprenyl-diphosphatase (271 aa).

The next 8 helical transmembrane spans lie at Y5–V25, A45–W65, T86–I106, L114–A134, I149–F169, A189–L209, V226–I246, and F251–A271.

This sequence belongs to the UppP family.

It localises to the cell inner membrane. The catalysed reaction is di-trans,octa-cis-undecaprenyl diphosphate + H2O = di-trans,octa-cis-undecaprenyl phosphate + phosphate + H(+). Its function is as follows. Catalyzes the dephosphorylation of undecaprenyl diphosphate (UPP). Confers resistance to bacitracin. The protein is Undecaprenyl-diphosphatase of Aeromonas salmonicida (strain A449).